Here is a 148-residue protein sequence, read N- to C-terminus: uncharacterized protein (148 aa).

The tract at residues 38-99 is disordered; that stretch reads QFRRHHHAEH…RRHLRKGHLK (62 aa). Residues 64–82 show a composition bias toward basic and acidic residues; it reads FHHDGGRHGHATRIHENNR. The span at 83–99 shows a compositional bias: basic residues; it reads RPHKRNRRRHLRKGHLK.

This is an uncharacterized protein from Fowl adenovirus A serotype 1 (strain CELO / Phelps) (FAdV-1).